A 235-amino-acid chain; its full sequence is Orotidine 5'-phosphate decarboxylase (235 aa).

Substrate is bound by residues D9, K31, 58–67 (DLKFHDIPNT), T121, R180, Q190, G210, and R211. K60 acts as the Proton donor in catalysis.

Belongs to the OMP decarboxylase family. Type 1 subfamily. In terms of assembly, homodimer.

It carries out the reaction orotidine 5'-phosphate + H(+) = UMP + CO2. It participates in pyrimidine metabolism; UMP biosynthesis via de novo pathway; UMP from orotate: step 2/2. Its function is as follows. Catalyzes the decarboxylation of orotidine 5'-monophosphate (OMP) to uridine 5'-monophosphate (UMP). This is Orotidine 5'-phosphate decarboxylase from Nitratidesulfovibrio vulgaris (strain ATCC 29579 / DSM 644 / CCUG 34227 / NCIMB 8303 / VKM B-1760 / Hildenborough) (Desulfovibrio vulgaris).